The sequence spans 112 residues: NADH-quinone oxidoreductase subunit K (112 aa).

A run of 3 helical transmembrane segments spans residues 14–34, 39–59, and 76–96; these read LEGYLTVAAIMFAIGAWGALI, VVVFMCVELMINAVNLTLVAF, and LIIAIAAAEVAVGLAIVLAIF.

This sequence belongs to the complex I subunit 4L family. In terms of assembly, NDH-1 is composed of 14 different subunits. Subunits NuoA, H, J, K, L, M, N constitute the membrane sector of the complex.

The protein localises to the cell membrane. The catalysed reaction is a quinone + NADH + 5 H(+)(in) = a quinol + NAD(+) + 4 H(+)(out). In terms of biological role, NDH-1 shuttles electrons from NADH, via FMN and iron-sulfur (Fe-S) centers, to quinones in the respiratory chain. The immediate electron acceptor for the enzyme in this species is believed to be a menaquinone. Couples the redox reaction to proton translocation (for every two electrons transferred, four hydrogen ions are translocated across the cytoplasmic membrane), and thus conserves the redox energy in a proton gradient. The polypeptide is NADH-quinone oxidoreductase subunit K (Rubrobacter xylanophilus (strain DSM 9941 / JCM 11954 / NBRC 16129 / PRD-1)).